A 163-amino-acid chain; its full sequence is Transcription antitermination protein NusB (163 aa).

Belongs to the NusB family.

Its function is as follows. Involved in transcription antitermination. Required for transcription of ribosomal RNA (rRNA) genes. Binds specifically to the boxA antiterminator sequence of the ribosomal RNA (rrn) operons. This chain is Transcription antitermination protein NusB, found in Mycolicibacterium vanbaalenii (strain DSM 7251 / JCM 13017 / BCRC 16820 / KCTC 9966 / NRRL B-24157 / PYR-1) (Mycobacterium vanbaalenii).